The sequence spans 275 residues: Ribosomal RNA small subunit methyltransferase A (275 aa).

N27, L29, G54, E76, D102, and N123 together coordinate S-adenosyl-L-methionine.

The protein belongs to the class I-like SAM-binding methyltransferase superfamily. rRNA adenine N(6)-methyltransferase family. RsmA subfamily.

The protein resides in the cytoplasm. The enzyme catalyses adenosine(1518)/adenosine(1519) in 16S rRNA + 4 S-adenosyl-L-methionine = N(6)-dimethyladenosine(1518)/N(6)-dimethyladenosine(1519) in 16S rRNA + 4 S-adenosyl-L-homocysteine + 4 H(+). In terms of biological role, specifically dimethylates two adjacent adenosines (A1518 and A1519) in the loop of a conserved hairpin near the 3'-end of 16S rRNA in the 30S particle. May play a critical role in biogenesis of 30S subunits. The polypeptide is Ribosomal RNA small subunit methyltransferase A (Chelativorans sp. (strain BNC1)).